Consider the following 803-residue polypeptide: Integrin beta-1 (803 aa).

The first 24 residues, 1 to 24 (MAETNLTLLTWAGILCCLIWSGSA), serve as a signal peptide directing secretion. Gln-25 bears the Blocked amino end (Gln) mark. Over 25–733 (QQGGSDCIKA…ETPECPSGPD (709 aa)) the chain is Extracellular. Residues 30–80 (DCIKANAKSCGECIQAGPNCGWCKKTDFLQEGEPTSARCDDLAALKSKGCP) form the PSI domain. Intrachain disulfides connect Cys-31-Cys-49, Cys-39-Cys-469, Cys-42-Cys-68, Cys-52-Cys-79, Cys-211-Cys-217, Cys-265-Cys-305, Cys-405-Cys-419, Cys-439-Cys-467, Cys-471-Cys-491, Cys-482-Cys-494, Cys-496-Cys-505, Cys-507-Cys-538, Cys-521-Cys-536, Cys-530-Cys-541, Cys-543-Cys-558, Cys-560-Cys-581, Cys-565-Cys-579, Cys-573-Cys-584, Cys-586-Cys-595, Cys-597-Cys-620, Cys-604-Cys-618, and Cys-612-Cys-623. A VWFA domain is found at 144–382 (DYPIDLYYLM…QLIIDAYNSL (239 aa)). The Mg(2+) site is built by Ser-156 and Ser-158. Ser-158, Asp-161, Asp-162, and Glu-193 together coordinate Ca(2+). Residues 211–217 (CTGDQNC) form a CX3CL1-binding region. Asn-216 carries an N-linked (GlcNAc...) asparagine glycan. Residues Asn-248, Asp-250, Pro-252, and Glu-253 each coordinate Ca(2+). Glu-253 lines the Mg(2+) pocket. Asn-273 is a glycosylation site (N-linked (GlcNAc...) asparagine). The CX3CL1-binding stretch occupies residues 299–318 (LPNDGKCHLENNMYTMSHYY). Residues Asn-367, Asn-410, Asn-421, Asn-433, Asn-445, and Asn-486 are each glycosylated (N-linked (GlcNAc...) asparagine). The tract at residues 387–470 (ILENSKLPKE…IHLQFICDCL (84 aa)) is interaction with TMEM182. I-EGF domains are found at residues 471 to 506 (CQSEGEPNSPACHDGNGTFECGACRCNEGRIGRLCE), 507 to 559 (CSTD…KYCE), 560 to 596 (CDNFNCDRSNGLICGGNGICKCRVCECFPNFTGSACD), and 597 to 636 (CSLDTTPCMAGNGQICNGRGTCECGTCNCTDPKFQGPTCE). Asn-525 carries an N-linked (GlcNAc...) asparagine glycan. An N-linked (GlcNAc...) asparagine glycan is attached at Asn-589. N-linked (GlcNAc...) asparagine glycosylation occurs at Asn-624. 6 cysteine pairs are disulfide-bonded: Cys-625/Cys-635, Cys-638/Cys-641, Cys-645/Cys-696, Cys-651/Cys-670, Cys-654/Cys-666, and Cys-704/Cys-728. Residue Asn-674 is glycosylated (N-linked (GlcNAc...) asparagine). Residues 734 to 756 (IIPIVAGVVAGIVLIGLALLLIW) traverse the membrane as a helical segment. The Cytoplasmic portion of the chain corresponds to 757-803 (KLLMIIHDRREFAKFEKEKMNAKWDTGENPIYKSAVTTVVNPKYEGK). Tyr-788 carries the phosphotyrosine; by Tyr-kinases modification.

It belongs to the integrin beta chain family. Heterodimer of an alpha and a beta subunit. Beta-1 associates with either alpha-1, alpha-2, alpha-3, alpha-4, alpha-5, alpha-6, alpha-7, alpha-8, alpha-9, alpha-10, alpha-11 or alpha-V. Interacts with TMEM182 and LAMB1. Expressed on surface of embryonic fibroblasts (at protein level).

Its subcellular location is the cell membrane. The protein localises to the cell projection. It is found in the invadopodium membrane. It localises to the ruffle membrane. The protein resides in the melanosome. Its subcellular location is the lamellipodium. The protein localises to the ruffle. It is found in the cell junction. It localises to the focal adhesion. Functionally, integrins alpha-1/beta-1, alpha-2/beta-1, alpha-10/beta-1 and alpha-11/beta-1 are receptors for collagen. Integrins alpha-1/beta-1 and alpha-2/beta-1 recognize the proline-hydroxylated sequence G-F-P-G-E-R in collagen. Integrins alpha-2/beta-1, alpha-3/beta-1, alpha-4/beta-1, alpha-5/beta-1, alpha-8/beta-1, alpha-10/beta-1, alpha-11/beta-1 and alpha-V/beta-1 are receptors for fibronectin. Alpha-4/beta-1 recognizes one or more domains within the alternatively spliced CS-1 and CS-5 regions of fibronectin. Integrin alpha-5/beta-1 is a receptor for fibrinogen. Integrin alpha-1/beta-1, alpha-2/beta-1, alpha-6/beta-1 and alpha-7/beta-1 are receptors for lamimin. Integrin alpha-6/beta-1 (ITGA6:ITGB1) is present in oocytes and is involved in sperm-egg fusion. Integrin alpha-4/beta-1 is a receptor for VCAM1 and recognizes the sequence Q-I-D-S in VCAM1. Integrin alpha-9/beta-1 is a receptor for VCAM1, cytotactin and osteopontin. It recognizes the sequence A-E-I-D-G-I-E-L in cytotactin. Integrin alpha-3/beta-1 is a receptor for epiligrin, thrombospondin and CSPG4. Integrin alpha-3/beta-1 provides a docking site for FAP (seprase) at invadopodia plasma membranes in a collagen-dependent manner and hence may participate in the adhesion, formation of invadopodia and matrix degradation processes, promoting cell invasion. Alpha-3/beta-1 may mediate with LGALS3 the stimulation by CSPG4 of endothelial cells migration. Integrin alpha-V/beta-1 is a receptor for vitronectin. Beta-1 integrins recognize the sequence R-G-D in a wide array of ligands. When associated with alpha-7/beta-1 integrin, regulates cell adhesion and laminin matrix deposition. Involved in promoting endothelial cell motility and angiogenesis. Involved in osteoblast compaction through the fibronectin fibrillogenesis cell-mediated matrix assembly process and the formation of mineralized bone nodules. May be involved in up-regulation of the activity of kinases such as PKC via binding to KRT1. Together with KRT1 and RACK1, serves as a platform for SRC activation or inactivation. ITGA4:ITGB1 binds to fractalkine (CX3CL1) and may act as its coreceptor in CX3CR1-dependent fractalkine signaling. ITGA4:ITGB1 and ITGA5:ITGB1 bind to PLA2G2A via a site (site 2) which is distinct from the classical ligand-binding site (site 1) and this induces integrin conformational changes and enhanced ligand binding to site 1. ITGA5:ITGB1 acts as a receptor for fibrillin-1 (FBN1) and mediates R-G-D-dependent cell adhesion to FBN1. ITGA5:ITGB1 acts as a receptor for fibronectin FN1 and mediates R-G-D-dependent cell adhesion to FN1. ITGA5:ITGB1 is a receptor for IL1B and binding is essential for IL1B signaling. ITGA5:ITGB3 is a receptor for soluble CD40LG and is required for CD40/CD40LG signaling. Plays an important role in myoblast differentiation and fusion during skeletal myogenesis. The polypeptide is Integrin beta-1 (ITGB1) (Gallus gallus (Chicken)).